We begin with the raw amino-acid sequence, 375 residues long: Succinyl-diaminopimelate desuccinylase (375 aa).

Residue His66 coordinates Zn(2+). Asp68 is a catalytic residue. Asp99 serves as a coordination point for Zn(2+). Residue Glu133 is the Proton acceptor of the active site. Residues Glu134, Glu162, and His348 each contribute to the Zn(2+) site.

Belongs to the peptidase M20A family. DapE subfamily. As to quaternary structure, homodimer. Requires Zn(2+) as cofactor. The cofactor is Co(2+).

The catalysed reaction is N-succinyl-(2S,6S)-2,6-diaminopimelate + H2O = (2S,6S)-2,6-diaminopimelate + succinate. The protein operates within amino-acid biosynthesis; L-lysine biosynthesis via DAP pathway; LL-2,6-diaminopimelate from (S)-tetrahydrodipicolinate (succinylase route): step 3/3. Its function is as follows. Catalyzes the hydrolysis of N-succinyl-L,L-diaminopimelic acid (SDAP), forming succinate and LL-2,6-diaminopimelate (DAP), an intermediate involved in the bacterial biosynthesis of lysine and meso-diaminopimelic acid, an essential component of bacterial cell walls. The chain is Succinyl-diaminopimelate desuccinylase from Cronobacter sakazakii (strain ATCC BAA-894) (Enterobacter sakazakii).